A 557-amino-acid polypeptide reads, in one-letter code: Dihydroxy-acid dehydratase (557 aa).

Aspartate 78 is a binding site for Mg(2+). [2Fe-2S] cluster is bound at residue cysteine 119. Mg(2+) contacts are provided by aspartate 120 and lysine 121. At lysine 121 the chain carries N6-carboxylysine. Cysteine 191 serves as a coordination point for [2Fe-2S] cluster. Glutamate 442 provides a ligand contact to Mg(2+). Catalysis depends on serine 468, which acts as the Proton acceptor.

The protein belongs to the IlvD/Edd family. In terms of assembly, homodimer. [2Fe-2S] cluster is required as a cofactor. It depends on Mg(2+) as a cofactor.

The catalysed reaction is (2R)-2,3-dihydroxy-3-methylbutanoate = 3-methyl-2-oxobutanoate + H2O. The enzyme catalyses (2R,3R)-2,3-dihydroxy-3-methylpentanoate = (S)-3-methyl-2-oxopentanoate + H2O. It participates in amino-acid biosynthesis; L-isoleucine biosynthesis; L-isoleucine from 2-oxobutanoate: step 3/4. The protein operates within amino-acid biosynthesis; L-valine biosynthesis; L-valine from pyruvate: step 3/4. Functions in the biosynthesis of branched-chain amino acids. Catalyzes the dehydration of (2R,3R)-2,3-dihydroxy-3-methylpentanoate (2,3-dihydroxy-3-methylvalerate) into 2-oxo-3-methylpentanoate (2-oxo-3-methylvalerate) and of (2R)-2,3-dihydroxy-3-methylbutanoate (2,3-dihydroxyisovalerate) into 2-oxo-3-methylbutanoate (2-oxoisovalerate), the penultimate precursor to L-isoleucine and L-valine, respectively. This chain is Dihydroxy-acid dehydratase, found in Lachnospira eligens (strain ATCC 27750 / DSM 3376 / VPI C15-48 / C15-B4) (Eubacterium eligens).